The following is a 348-amino-acid chain: Mitogen-activated protein kinase 14B (348 aa).

In terms of domain architecture, Protein kinase spans 25–309; sequence YQNLSPVGSG…ASQALAHPYF (285 aa). Residues 31–39 and Lys54 each bind ATP; that span reads VGSGAYGSV. Asp169 acts as the Proton acceptor in catalysis. Position 181 is a phosphothreonine; by MAP2K3 (Thr181). The TXY motif lies at 181–183; that stretch reads TGY. Tyr183 is subject to Phosphotyrosine; by MAP2K3.

This sequence belongs to the protein kinase superfamily. CMGC Ser/Thr protein kinase family. MAP kinase subfamily. Mg(2+) is required as a cofactor. Post-translationally, dually phosphorylated on Thr-181 and Tyr-183, which activates the enzyme.

It is found in the cytoplasm. The protein localises to the nucleus. It carries out the reaction L-seryl-[protein] + ATP = O-phospho-L-seryl-[protein] + ADP + H(+). The enzyme catalyses L-threonyl-[protein] + ATP = O-phospho-L-threonyl-[protein] + ADP + H(+). With respect to regulation, activated by threonine and tyrosine phosphorylation by the dual specificity kinase, MKK3. In terms of biological role, serine/threonine kinase which acts as an essential component of the MAP kinase signal transduction pathway. Mapk14b is one of the four p38 MAPKs which play an important role in the cascades of cellular responses evoked by extracellular stimuli such as pro-inflammatory cytokines or physical stress leading to direct activation of transcription factors. Accordingly, p38 MAPKs phosphorylate a broad range of proteins and it has been estimated that they may have approximately 200 to 300 substrates each. Some of the targets are downstream kinases which are activated through phosphorylation and further phosphorylate additional targets. The protein is Mitogen-activated protein kinase 14B (mapk14b) of Danio rerio (Zebrafish).